The following is a 225-amino-acid chain: Lipoprotein CseA (225 aa).

The N-terminal stretch at M1–G36 is a signal peptide. A lipid anchor (N-palmitoyl cysteine) is attached at C37. Residue C37 is the site of S-diacylglycerol cysteine attachment. Disordered regions lie at residues G40 to R77 and T205 to S225. Over residues S60–K73 the composition is skewed to low complexity.

It is found in the cell membrane. May be involved in the stabilization of the cell envelope or may interact with the sensor protein CseC to modulate its activity, in response to cell envelope stress. The sequence is that of Lipoprotein CseA (cseA) from Streptomyces coelicolor (strain ATCC BAA-471 / A3(2) / M145).